A 436-amino-acid chain; its full sequence is Prenyltransferase nscD (436 aa).

Belongs to the tryptophan dimethylallyltransferase family.

The protein operates within secondary metabolite biosynthesis. Its function is as follows. Prenyltransferase; part of the gene cluster that mediates the biosynthesis of neosartoricin B, a prenylated anthracenone that probably exhibits T-cell antiproliferative activity, suggestive of a physiological role as an immunosuppressive agent. The non-reducing polyketide synthase nscA probably synthesizes and cyclizes the decaketide backbone. The hydrolase nscB then mediates the product release through hydrolysis followed by spontaneous decarboxylation. The prenyltransferase nscD catalyzes the addition of the dimethylallyl group to the aromatic C5. The FAD-dependent monooxygenase nscC is then responsible for the stereospecific hydroxylation at C2. Neosartoricin B can be converted into two additional compounds neosartoricins C and D. Neosartoricin C is a spirocyclic compound that is cyclized through the attack of C3 hydroxyl on C14, followed by dehydration. On the other hand, neosartoricin D is a further cyclized compound in which attack of C2 on C14 in neosartoricin C results in the formation of the acetal-containing dioxabicyclo-octanone ring. Both of these compounds are novel and possibly represent related metabolites of the gene cluster. The sequence is that of Prenyltransferase nscD from Arthroderma benhamiae (strain ATCC MYA-4681 / CBS 112371) (Trichophyton mentagrophytes).